A 361-amino-acid chain; its full sequence is Uroporphyrinogen decarboxylase (361 aa).

Residues 44–48 (RQAGR), Asp93, Tyr168, Ser223, and His337 each bind substrate.

This sequence belongs to the uroporphyrinogen decarboxylase family. As to quaternary structure, homodimer.

The protein resides in the cytoplasm. It catalyses the reaction uroporphyrinogen III + 4 H(+) = coproporphyrinogen III + 4 CO2. Its pathway is porphyrin-containing compound metabolism; protoporphyrin-IX biosynthesis; coproporphyrinogen-III from 5-aminolevulinate: step 4/4. Functionally, catalyzes the decarboxylation of four acetate groups of uroporphyrinogen-III to yield coproporphyrinogen-III. The chain is Uroporphyrinogen decarboxylase from Thermobifida fusca (strain YX).